The chain runs to 188 residues: Phospholipase A2 inhibitor 31 kDa subunit (188 aa).

Intrachain disulfides connect Cys-3/Cys-27, Cys-6/Cys-13, Cys-20/Cys-48, Cys-54/Cys-75, Cys-76/Cys-81, Cys-99/Cys-124, Cys-117/Cys-146, and Cys-150/Cys-172. N-linked (GlcNAc...) asparagine glycosylation is present at Asn-157.

The protein belongs to the CNF-like-inhibitor family. As to quaternary structure, heterodimer with phospholipase A2 inhibitor 25 kDa. Post-translationally, N-glycosylated. Expressed by the liver.

Its subcellular location is the secreted. Functionally, inhibits the enzymatic activity of phospholipase A2. In Naja kaouthia (Monocled cobra), this protein is Phospholipase A2 inhibitor 31 kDa subunit.